The primary structure comprises 209 residues: Putative 3-methyladenine DNA glycosylase (209 aa).

It belongs to the DNA glycosylase MPG family.

The protein is Putative 3-methyladenine DNA glycosylase of Deinococcus geothermalis (strain DSM 11300 / CIP 105573 / AG-3a).